The sequence spans 1135 residues: MDVDGRWRNLPSGPSLKHLTDPSYGIPPEQQKAALQDLTRAHVDSFNYAALEGLSHAVQAIPPFEFAFKDERISLTIVDAVISPPSVPKGTICKDLNVYPAECRGRKSTYRGRLTADISWAVNGVPKGIIKQFLGYVPIMVKSKLCNLYNLPPRVLIEHHEEAEEMGGYFIINGIEKVIRMLIVPRRNFPIAMVRPKWKSRGLGYTQFGVSMRCVREEHSAVNMNLHYVENGTVMLNFIYRKELFFLPLGFALKALVSFSDYQIFQELIKGKEEDSFFRNSVSQMLRIVIEEGCHSQKQVLNYLGECFRVKLSLPDWYPNVEAAEFLLNQCICIHLQSNTDKFYLLCLMTRKLFALARGECMDDNPDSLVNQEVLSPGQLFLMFLKEKMENWLVSIKIVLDKRAQKANVSINNENLMKIFSMGTELTRPFEYLLATGNLRSKTGLGFLQDSGLCVVADKLNFLRYLSHFRCVHRGAAFAKMRTTTVRRLLPESWGFLCPVHTPDGAPCGLLNHLTAVCEVVTKFVYTASIPALLCGLGVTPVDTAPCRPYSDCYPVLLDGVMVGWVDKDLAPEVADTLRRFKVLREKRIPPWMEVALIPMTGKPSLYPGLFLFTTPCRLVRPVQNLELGREELIGTMEQLFMNVAIFEDEVFGGISTHQELFPHSLLSVIANFIPFSDHNQSPRNMYQCQMGKQTMGFPLLTYQNRSDNKLYRLQTPQSPLVRPCMYDFYDMDNYPIGTNAIVAVISYTGYDMEDAMIVNKASWERGFAHGSVYKSEFIDLSEKFKQGEDNLVFGVKPGDPRVMQKLDDDGLPFIGAKLEYGDPYYSYLNLNTGEGFVVYYKSKENCVVDNIKVCSNDMGSGKFKCICITVRIPRNPTIGDKFASRHGQKGILSRLWPAEDMPFTESGMMPDILFNPHGFPSRMTIGMLIESMAGKSAALHGLCHDATPFIFSEENSALEYFGEMLKAAGYNFYGTERLYSGISGMELEADIFIGVVYYQRLRHMVSDKFQVRTTGARDKVTNQPLGGRNVQGGIRFGEMERDALLAHGTSFLLHDRLFNCSDRSVAHMCVECGSLLSPLLEKPPPSWSAMRNRKYNCTVCGRSDTIDTVSVPYVFRYFVAELAAMNIKVKLDVI.

Residues 1 to 26 (MDVDGRWRNLPSGPSLKHLTDPSYGI) form a disordered region. Arg-180 is a binding site for RNA. Positions 194–208 (VRPKWKSRGLGYTQF) are loop B. The interval 236–247 (LNFIYRKELFFL) is loop A. Residue Asp-367 participates in RNA binding. Fork loop regions lie at residues 439–453 (LRSK…DSGL) and 474–489 (RGAA…VRRL). Position 755 (Asp-755) interacts with Mg(2+). Residue Lys-890 participates in RNA binding. Residues Lys-1020 and Arg-1036 each contribute to the DNA site. At Ser-1051 the chain carries Phosphoserine. Zn(2+) contacts are provided by Cys-1070, Cys-1073, Cys-1098, and Cys-1101. The C4-type zinc finger occupies 1070–1101 (CVECGSLLSPLLEKPPPSWSAMRNRKYNCTVC).

The protein belongs to the RNA polymerase beta chain family. As to quaternary structure, component of the RNA polymerase I (Pol I) complex consisting of 13 subunits: a ten-subunit catalytic core composed of POLR1A/RPA1, POLR1B/RPA2, POLR1C/RPAC1, POLR1D/RPAC2, POLR1H/RPA12, POLR2E/RPABC1, POLR2F/RPABC2, POLR2H/RPABC3, POLR2K/RPABC4 and POLR2L/RPABC5; a mobile stalk subunit POLR1F/RPA43 protruding from the core and additional subunits homologous to general transcription factors POLR1E/RPA49 and POLR1G/RPA34. Part of Pol I pre-initiation complex (PIC), in which Pol I core assembles with RRN3 and promoter-bound UTBF and SL1/TIF-IB complex. The cofactor is Mg(2+).

It is found in the nucleus. Its subcellular location is the nucleolus. It localises to the chromosome. It catalyses the reaction RNA(n) + a ribonucleoside 5'-triphosphate = RNA(n+1) + diphosphate. Its function is as follows. Catalytic core component of RNA polymerase I (Pol I), a DNA-dependent RNA polymerase which synthesizes ribosomal RNA precursors using the four ribonucleoside triphosphates as substrates. Transcribes 47S pre-rRNAs from multicopy rRNA gene clusters, giving rise to 5.8S, 18S and 28S ribosomal RNAs. Pol I-mediated transcription cycle proceeds through transcription initiation, transcription elongation and transcription termination stages. During transcription initiation, Pol I pre-initiation complex (PIC) is recruited by the selectivity factor 1 (SL1/TIF-IB) complex bound to the core promoter that precedes an rDNA repeat unit. The PIC assembly bends the promoter favoring the formation of the transcription bubble and promoter escape. Once the polymerase has escaped from the promoter it enters the elongation phase during which RNA is actively polymerized, based on complementarity with the template DNA strand. Highly processive, assembles in structures referred to as 'Miller trees' where many elongating Pol I complexes queue and transcribe the same rDNA coding regions. At terminator sequences downstream of the rDNA gene, PTRF interacts with Pol I and halts Pol I transcription leading to the release of the RNA transcript and polymerase from the DNA. Forms Pol I active center together with the largest subunit POLR1A/RPA1. Appends one nucleotide at a time to the 3' end of the nascent RNA, with POLR1A/RPA1 contributing a Mg(2+)-coordinating DxDGD motif, and POLR1B/RPA2 participating in the coordination of a second Mg(2+) ion and providing lysine residues believed to facilitate Watson-Crick base pairing between the incoming nucleotide and the template base. Typically, Mg(2+) ions direct a 5' nucleoside triphosphate to form a phosphodiester bond with the 3' hydroxyl of the preceding nucleotide of the nascent RNA, with the elimination of pyrophosphate. Has proofreading activity: Pauses and backtracks to allow the cleavage of a missincorporated nucleotide via POLR1H/RPA12. High Pol I processivity is associated with decreased transcription fidelity. The protein is DNA-directed RNA polymerase I subunit RPA2 of Mus musculus (Mouse).